Reading from the N-terminus, the 137-residue chain is Small ribosomal subunit protein uS12 (137 aa).

Residues 1 to 57 form a disordered region; the sequence is MPTINQLVRKPRQSKSKKSDSPVLNRGFNSKKKQFTNLNSPQKRGVCTRVGTMTPRK. Residue Asp102 is modified to 3-methylthioaspartic acid. The segment at 118 to 137 is disordered; the sequence is SGVDGRRQGRSLYGTKKPKN.

This sequence belongs to the universal ribosomal protein uS12 family. Part of the 30S ribosomal subunit. Contacts proteins S8 and S17. May interact with IF1 in the 30S initiation complex.

Functionally, with S4 and S5 plays an important role in translational accuracy. Its function is as follows. Interacts with and stabilizes bases of the 16S rRNA that are involved in tRNA selection in the A site and with the mRNA backbone. Located at the interface of the 30S and 50S subunits, it traverses the body of the 30S subunit contacting proteins on the other side and probably holding the rRNA structure together. The combined cluster of proteins S8, S12 and S17 appears to hold together the shoulder and platform of the 30S subunit. The sequence is that of Small ribosomal subunit protein uS12 from Staphylococcus haemolyticus (strain JCSC1435).